We begin with the raw amino-acid sequence, 412 residues long: Argininosuccinate synthase (412 aa).

Residues Ala-10 to Ser-18 and Ala-36 each bind ATP. The L-citrulline site is built by Tyr-87 and Ser-92. Tyr-87 is subject to Phosphotyrosine. N6-acetyllysine is present on Lys-112. Tyr-113 is modified (phosphotyrosine). An ATP-binding site is contributed by Ser-115–Asn-123. L-aspartate contacts are provided by Thr-119, Asn-123, and Asp-124. An L-citrulline-binding site is contributed by Asn-123. Arg-127 is a binding site for L-citrulline. An N6-acetyllysine; by CLOCK mark is found at Lys-165 and Lys-176. L-citrulline contacts are provided by Ser-180 and Ser-189. The residue at position 180 (Ser-180) is a Phosphoserine. Position 219 is a phosphothreonine (Thr-219). L-citrulline-binding residues include Glu-270 and Tyr-282.

It belongs to the argininosuccinate synthase family. Type 1 subfamily. Homotetramer. Interacts with NMRAL1. Interacts with CLOCK; in a circadian manner. Forms tissue-specific complexes with ASL, SLC7A1, HSP90AA1 and nitric oxide synthase NOS1, NOS2 or NOS3; the complex regulates cell-autonomous L-arginine synthesis and citrulline recycling while channeling extracellular L-arginine to nitric oxide synthesis pathway. In terms of processing, acetylated by CLOCK in a circadian manner which negatively regulates its enzyme activity. Deacetylated by histone deacetylases. As to expression, expressed in adult liver.

Its subcellular location is the cytoplasm. The protein localises to the cytosol. It catalyses the reaction L-citrulline + L-aspartate + ATP = 2-(N(omega)-L-arginino)succinate + AMP + diphosphate + H(+). Its pathway is amino-acid biosynthesis; L-arginine biosynthesis; L-arginine from L-ornithine and carbamoyl phosphate: step 2/3. The protein operates within nitrogen metabolism; urea cycle; (N(omega)-L-arginino)succinate from L-aspartate and L-citrulline: step 1/1. Functionally, one of the enzymes of the urea cycle, the metabolic pathway transforming neurotoxic amonia produced by protein catabolism into inocuous urea in the liver of ureotelic animals. Catalyzes the formation of arginosuccinate from aspartate, citrulline and ATP and together with ASL it is responsible for the biosynthesis of arginine in most body tissues. The polypeptide is Argininosuccinate synthase (Homo sapiens (Human)).